The chain runs to 1222 residues: Alpha-mannosidase D (1222 aa).

Positions M1 to T21 are cleaved as a signal peptide. Residues F22–L1170 lie on the Extracellular side of the membrane. Zn(2+) contacts are provided by H71 and D73. Residue N175 is glycosylated (N-linked (GlcNAc...) asparagine). Zn(2+)-binding residues include D185 and H453. The active-site Nucleophile is D185. N-linked (GlcNAc...) asparagine glycans are attached at residues N492, N496, N547, N551, N566, N613, N665, N768, N785, N952, N981, N1069, and N1084. Over residues K493 to T549 the composition is skewed to low complexity. The interval K493–E554 is disordered. The chain crosses the membrane as a helical span at residues I1171 to V1191. At T1192–P1222 the chain is on the cytoplasmic side. The segment covering L1202–L1211 has biased composition (low complexity). The tract at residues L1202–P1222 is disordered. The span at I1212–P1222 shows a compositional bias: polar residues.

This sequence belongs to the glycosyl hydrolase 38 family. Requires Zn(2+) as cofactor.

Its subcellular location is the membrane. The enzyme catalyses Hydrolysis of terminal, non-reducing alpha-D-mannose residues in alpha-D-mannosides.. The protein is Alpha-mannosidase D (manD) of Dictyostelium discoideum (Social amoeba).